The following is a 194-amino-acid chain: Outer surface 22 kDa lipoprotein (194 aa).

The N-terminal stretch at 1 to 21 is a signal peptide; sequence MYKNGFFKNYLSLFLIFLVIA. A lipid anchor (N-palmitoyl cysteine) is attached at cysteine 22. Cysteine 22 carries the S-diacylglycerol cysteine lipid modification.

The protein resides in the cell outer membrane. In Borreliella burgdorferi (strain ZS7) (Borrelia burgdorferi), this protein is Outer surface 22 kDa lipoprotein (p22).